The following is a 177-amino-acid chain: UPF0316 protein STH2077 (177 aa).

The next 2 helical transmembrane spans lie at 9 to 29 and 41 to 61; these read AALD…VNTV and LASA…GLVV.

It belongs to the UPF0316 family.

The protein resides in the cell membrane. The polypeptide is UPF0316 protein STH2077 (Symbiobacterium thermophilum (strain DSM 24528 / JCM 14929 / IAM 14863 / T)).